We begin with the raw amino-acid sequence, 221 residues long: Lectin L6 (221 aa).

6 repeat units span residues 1 to 38, 39 to 75, 76 to 113, 114 to 150, 151 to 188, and 189 to 221. Positions 1–221 are 6 X approximate tandem repeats; it reads VQWHQIPGKL…NSVDNIYRSG (221 aa). Cys-32 and Cys-36 are oxidised to a cystine. Cys-108 and Cys-112 form a disulfide bridge. A disulfide bridge links Cys-183 with Cys-187.

This sequence belongs to the tectonin family. Hemocytes.

It is found in the cytoplasmic vesicle. The protein resides in the secretory vesicle. In terms of biological role, lipopolysaccharide-binding protein with Gram-negative antibacterial activity. Binds zinc and calcium. The chain is Lectin L6 from Tachypleus tridentatus (Japanese horseshoe crab).